We begin with the raw amino-acid sequence, 192 residues long: UPF0149 protein KPN78578_32810 (192 aa).

This sequence belongs to the UPF0149 family.

The protein is UPF0149 protein KPN78578_32810 of Klebsiella pneumoniae subsp. pneumoniae (strain ATCC 700721 / MGH 78578).